Here is a 388-residue protein sequence, read N- to C-terminus: S-adenosylmethionine synthase (388 aa).

His16 contacts ATP. Mg(2+) is bound at residue Asp18. Glu44 serves as a coordination point for K(+). 2 residues coordinate L-methionine: Glu57 and Gln100. The tract at residues Gln100–Arg110 is flexible loop. ATP-binding positions include Asp165–Lys167, Asp240, Arg246–Lys247, Ala263, and Lys267. Asp240 lines the L-methionine pocket. Lys271 contacts L-methionine.

Belongs to the AdoMet synthase family. Homotetramer; dimer of dimers. Requires Mg(2+) as cofactor. The cofactor is K(+).

It is found in the cytoplasm. It carries out the reaction L-methionine + ATP + H2O = S-adenosyl-L-methionine + phosphate + diphosphate. Its pathway is amino-acid biosynthesis; S-adenosyl-L-methionine biosynthesis; S-adenosyl-L-methionine from L-methionine: step 1/1. Functionally, catalyzes the formation of S-adenosylmethionine (AdoMet) from methionine and ATP. The overall synthetic reaction is composed of two sequential steps, AdoMet formation and the subsequent tripolyphosphate hydrolysis which occurs prior to release of AdoMet from the enzyme. The protein is S-adenosylmethionine synthase of Acinetobacter baumannii (strain ACICU).